The following is a 330-amino-acid chain: Aspartate--ammonia ligase (330 aa).

This sequence belongs to the class-II aminoacyl-tRNA synthetase family. AsnA subfamily.

It localises to the cytoplasm. It catalyses the reaction L-aspartate + NH4(+) + ATP = L-asparagine + AMP + diphosphate + H(+). The protein operates within amino-acid biosynthesis; L-asparagine biosynthesis; L-asparagine from L-aspartate (ammonia route): step 1/1. The protein is Aspartate--ammonia ligase of Enterobacter sp. (strain 638).